The following is a 544-amino-acid chain: CTP synthase (544 aa).

The segment at 1–265 (MTKFIFVTGG…DDIICEHLDL (265 aa)) is amidoligase domain. Residue serine 13 participates in CTP binding. Serine 13 contacts UTP. ATP is bound by residues 14 to 19 (SLGKGI) and aspartate 71. Mg(2+) contacts are provided by aspartate 71 and glutamate 139. Residues 146–148 (DIE), 186–191 (KTKPTQ), and lysine 222 each bind CTP. Residues 186–191 (KTKPTQ) and lysine 222 each bind UTP. A Glutamine amidotransferase type-1 domain is found at 290-542 (NIAMVGKYVD…VEAALAYQAD (253 aa)). Glycine 351 contributes to the L-glutamine binding site. Cysteine 378 functions as the Nucleophile; for glutamine hydrolysis in the catalytic mechanism. Residues 379-382 (LGMQ), glutamate 402, and arginine 469 each bind L-glutamine. Active-site residues include histidine 515 and glutamate 517.

The protein belongs to the CTP synthase family. In terms of assembly, homotetramer.

It catalyses the reaction UTP + L-glutamine + ATP + H2O = CTP + L-glutamate + ADP + phosphate + 2 H(+). The catalysed reaction is L-glutamine + H2O = L-glutamate + NH4(+). The enzyme catalyses UTP + NH4(+) + ATP = CTP + ADP + phosphate + 2 H(+). The protein operates within pyrimidine metabolism; CTP biosynthesis via de novo pathway; CTP from UDP: step 2/2. Allosterically activated by GTP, when glutamine is the substrate; GTP has no effect on the reaction when ammonia is the substrate. The allosteric effector GTP functions by stabilizing the protein conformation that binds the tetrahedral intermediate(s) formed during glutamine hydrolysis. Inhibited by the product CTP, via allosteric rather than competitive inhibition. Its function is as follows. Catalyzes the ATP-dependent amination of UTP to CTP with either L-glutamine or ammonia as the source of nitrogen. Regulates intracellular CTP levels through interactions with the four ribonucleotide triphosphates. This chain is CTP synthase, found in Laribacter hongkongensis (strain HLHK9).